Consider the following 858-residue polypeptide: Leucine--tRNA ligase (858 aa).

The 'HIGH' region motif lies at 53–63 (PYPSGNLHMGH). A 'KMSKS' region motif is present at residues 622–626 (KMSKS). Lys625 serves as a coordination point for ATP.

The protein belongs to the class-I aminoacyl-tRNA synthetase family.

Its subcellular location is the cytoplasm. It carries out the reaction tRNA(Leu) + L-leucine + ATP = L-leucyl-tRNA(Leu) + AMP + diphosphate. The polypeptide is Leucine--tRNA ligase (Prochlorococcus marinus subsp. pastoris (strain CCMP1986 / NIES-2087 / MED4)).